Consider the following 662-residue polypeptide: Calcium-dependent protease (662 aa).

A Peptidase S8 domain is found at 196–529 (QWHLKETTIG…YGRINALKAV (334 aa)). Active-site charge relay system residues include Asp-233, His-270, and Ser-466. The P/Homo B domain maps to 535–662 (AQPEPVSIFT…IRSLTIELGF (128 aa)).

The protein belongs to the peptidase S8 family.

The protein localises to the cytoplasm. Its function is as follows. Degrades phycobiliproteins in vitro. Has a substrate specificity similar to that of trypsin. In Nostoc sp. (strain PCC 7120 / SAG 25.82 / UTEX 2576), this protein is Calcium-dependent protease (prcA).